A 283-amino-acid polypeptide reads, in one-letter code: Urease accessory protein UreD (283 aa).

Belongs to the UreD family. UreD, UreF and UreG form a complex that acts as a GTP-hydrolysis-dependent molecular chaperone, activating the urease apoprotein by helping to assemble the nickel containing metallocenter of UreC. The UreE protein probably delivers the nickel.

It is found in the cytoplasm. Its function is as follows. Required for maturation of urease via the functional incorporation of the urease nickel metallocenter. The sequence is that of Urease accessory protein UreD from Rhodopseudomonas palustris (strain BisB5).